We begin with the raw amino-acid sequence, 371 residues long: MNQMKDTILLAGLGLIGGSIALAIKKNHPGKRIIGIDISDEQAVAALKLGVIDDRADSFISGVKEAATVIIATPVEQTLVMLEELAHSGIEHELLITDVGSTKQKVVDYADQVLPSRYQFVGGHPMAGSHKSGVAAAKEFLFENAFYILTPGQKTDKQAVEQLKNLLKGTNAHFVEMSPEEHDGVTSVISHFPHIVAASLVHQTHHSENLYPLVKRFAAGGFRDITRIASSSPAMWRDILLHNKDKILDRFDEWIREIDKIRTYVEQEDAENLFRYFKTAKDYRDGLPLRQKGAIPAFYDLYVDVPDHPGVISEITAILAAERISITNIRIIETREDINGILRISFQSDDDRKRAEQCIEARAEYETFYAD.

Positions 6–295 (DTILLAGLGL…GLPLRQKGAI (290 aa)) constitute a Prephenate/arogenate dehydrogenase domain. 7 to 37 (TILLAGLGLIGGSIALAIKKNHPGKRIIGID) lines the NAD(+) pocket. Residues 300–371 (DLYVDVPDHP…RAEYETFYAD (72 aa)) form the ACT domain.

The protein belongs to the prephenate/arogenate dehydrogenase family.

The enzyme catalyses prephenate + NAD(+) = 3-(4-hydroxyphenyl)pyruvate + CO2 + NADH. It functions in the pathway amino-acid biosynthesis; L-tyrosine biosynthesis; (4-hydroxyphenyl)pyruvate from prephenate (NAD(+) route): step 1/1. The chain is Prephenate dehydrogenase (tyrA) from Bacillus subtilis (strain 168).